The following is a 180-amino-acid chain: Formate hydrogenlyase subunit 6 (180 aa).

4Fe-4S ferredoxin-type domains are found at residues 31–60 (GKPEQNPQQCIGCAACVNACPSNALTVETD) and 66–95 (LAWEFNLGHCIFCGRCEEVCPTAAIKLSQE). Residues cysteine 40, cysteine 43, cysteine 46, cysteine 50, cysteine 75, cysteine 78, cysteine 81, and cysteine 85 each coordinate [4Fe-4S] cluster.

As to quaternary structure, FHL comprises of a formate dehydrogenase, unidentified electron carriers and a hydrogenase (isoenzyme 3). In this non-energy conserving pathway, molecular hydrogen and carbodioxide are released from formate.

Its function is as follows. Probable electron transfer protein for hydrogenase 3. The protein is Formate hydrogenlyase subunit 6 (hycF) of Escherichia coli (strain K12).